The sequence spans 394 residues: Na(+)/H(+) antiporter NhaA 2 (394 aa).

11 consecutive transmembrane segments (helical) span residues 13-33 (FGGV…NGFL), 58-78 (LILW…GLEL), 93-113 (IALP…IFWA), 124-144 (GWAI…MLLG), 153-173 (IFLL…IAIF), 176-196 (TKLS…LWVL), 208-228 (ILVT…ATIA), 260-280 (YFIL…GVQI), 291-311 (IFFG…YIFI), 327-347 (FYGV…VNSL), and 361-381 (LGIL…LLVF).

This sequence belongs to the NhaA Na(+)/H(+) (TC 2.A.33) antiporter family.

It localises to the cell inner membrane. The catalysed reaction is Na(+)(in) + 2 H(+)(out) = Na(+)(out) + 2 H(+)(in). In terms of biological role, na(+)/H(+) antiporter that extrudes sodium in exchange for external protons. This is Na(+)/H(+) antiporter NhaA 2 from Campylobacter fetus subsp. fetus (strain 82-40).